We begin with the raw amino-acid sequence, 297 residues long: Adrenocorticotropic hormone receptor (297 aa).

At 1-23 (MKHIIHASGNVNGTARNNSDCPH) the chain is on the extracellular side. 2 N-linked (GlcNAc...) asparagine glycosylation sites follow: Asn12 and Asn17. 2 cysteine pairs are disulfide-bonded: Cys21–Cys253 and Cys245–Cys251. Residues 24 to 49 (VALPEEIFFIISITGVLENLIIILAV) traverse the membrane as a helical segment. At 50-58 (IKNKNLQFP) the chain is on the cytoplasmic side. Residues 59 to 79 (MYFFICSLAISDMLGSLYKIL) form a helical membrane-spanning segment. Over 80–104 (ESILIMFRNMGYFKPHGSFETTTDD) the chain is Extracellular. The helical transmembrane segment at 105–126 (IIDTMFILSLLGSIFSLLAIAV) threads the bilayer. Residues 127–147 (DRYITIFHALQYHSIVTMHRT) are Cytoplasmic-facing. The chain crosses the membrane as a helical span at residues 148-168 (IAVLSIIWTFCIGSGITMVLF). Topologically, residues 169 to 180 (SHHVPTVLTFTS) are extracellular. Residues 181-199 (LFPLMLVFILCLYVHMFLM) form a helical membrane-spanning segment. The Cytoplasmic portion of the chain corresponds to 200–217 (ARSHARNISTLPRGNMRG). Residues 218–244 (AITLTILLGVFIFCWAPFILHILLVTF) traverse the membrane as a helical segment. Residues 245–256 (CPNNPYCTCYIS) are Extracellular-facing. A helical transmembrane segment spans residues 257–278 (LFHVNGMLIMCNAVIDPFIYAF). The Cytoplasmic segment spans residues 279 to 297 (RSPELRSAFRRMISYSKCL). Residue Cys296 is the site of S-palmitoyl cysteine attachment.

It belongs to the G-protein coupled receptor 1 family. As to quaternary structure, homodimer. Interacts with corticotropin (ACTH). Interacts with MRAP; this interaction targets MC2R to the plasma membrane. Interacts with MRAP2; competing with MRAP for binding to MC2R and impairing the binding of corticotropin (ACTH). In terms of processing, ubiquitinated by MGRN1 that may be involved in post-endocytic trafficking and/or degradation of internalized receptor.

It localises to the cell membrane. In terms of biological role, hormone receptor primarily expressed in adrenal cortex that plays a key role in regulating adrenocortical function. Upon corticotropin (ACTH) binding, facilitates the release of adrenal glucocorticoids, including cortisol and corticosterone. In addition, MC2R is required for fetal and neonatal adrenal gland development. Mechanistically, activates adenylate cyclase (cAMP), the MAPK cascade as well as the cAMP-dependent protein kinase A pathway leading to steroidogenic factor 1/NR5A1-mediated transcriptional activation. This Cavia porcellus (Guinea pig) protein is Adrenocorticotropic hormone receptor (MC2R).